We begin with the raw amino-acid sequence, 166 residues long: Salivary acidic proline-rich phosphoprotein 1/2 (166 aa).

The signal sequence occupies residues 1–16 (MLLILLSVALLAFSSA). The tract at residues 16–166 (AQDLDEDVSQ…QGPPQGQSPQ (151 aa)) is disordered. Gln17 carries the pyrrolidone carboxylic acid modification. The inhibits hydroxyapatite formation, binds to hydroxyapatite and calcium stretch occupies residues 17 to 46 (QDLDEDVSQEDVPLVISDGGDSEQFIDEER). Ser24 is modified (phosphoserine; by FAM20C). Ser33 is modified (phosphoserine; alternate). O-linked (GlcA) serine; alternate glycosylation is found at Ser33 and Ser38. Residue Ser38 is modified to Phosphoserine; by FAM20C; alternate. Composition is skewed to low complexity over residues 48 to 61 (GPPLGGQQSQPSAG) and 68 to 82 (GPQQGPPQQGGQQQQ). Pro residues-rich tracts occupy residues 83 to 111 (GPPPPQGKPQGPPQQGGHPPPPQGRPQGP) and 137 to 159 (GPPPPPPGKPQGPPPQGGRPQGP).

In terms of processing, proteolytically cleaved; PRP-2, PRP-1, PIF-S and Db-S yield PRP-4, PRP-3 (protein A), PIF-F and Db-F, respectively. Post-translationally, a hexuronic acid was shown to be linked to Ser-33 in about 40% of the polypeptides. Neither the structure of the carbohydrate (whether glucuronic acid or an isomer of), nor the linkage (whether a glycoside or an ester) has been definitely established.

Its subcellular location is the secreted. Its function is as follows. PRP's act as highly potent inhibitors of crystal growth of calcium phosphates. They provide a protective and reparative environment for dental enamel which is important for the integrity of the teeth. This is Salivary acidic proline-rich phosphoprotein 1/2 (PRH1) from Homo sapiens (Human).